A 109-amino-acid polypeptide reads, in one-letter code: Nucleoid-associated protein swp_1717 (109 aa).

Residues 88–109 (QKDKMAEVTGGMQLPPGMKMPF) form a disordered region.

The protein belongs to the YbaB/EbfC family. As to quaternary structure, homodimer.

The protein localises to the cytoplasm. It localises to the nucleoid. In terms of biological role, binds to DNA and alters its conformation. May be involved in regulation of gene expression, nucleoid organization and DNA protection. The sequence is that of Nucleoid-associated protein swp_1717 from Shewanella piezotolerans (strain WP3 / JCM 13877).